The primary structure comprises 481 residues: Zinc metalloproteinase/disintegrin (481 aa).

The signal sequence occupies residues 1-20 (MIQVLLVTICLAVFPYQGSS). A propeptide spanning residues 21–190 (IILESGNVDD…KASQLYLTPE (170 aa)) is cleaved from the precursor. Positions 197–392 (RYIKLAIVVD…DNPQCILNAP (196 aa)) constitute a Peptidase M12B domain. Cystine bridges form between cysteine 308–cysteine 387, cysteine 349–cysteine 371, and cysteine 351–cysteine 354. Zn(2+) is bound at residue histidine 333. The active site involves glutamate 334. 2 residues coordinate Zn(2+): histidine 337 and histidine 343. A propeptide spanning residues 393-408 (LRTDTVSTPVSGNEFL) is cleaved from the precursor. Residues 400–481 (TPVSGNEFLE…ADCPRNGLYS (82 aa)) form the Disintegrin domain. 6 disulfide bridges follow: cysteine 414-cysteine 429, cysteine 416-cysteine 424, cysteine 423-cysteine 446, cysteine 437-cysteine 443, cysteine 442-cysteine 467, and cysteine 455-cysteine 474. The short motif at 459–461 (RGD) is the Cell attachment site element.

Belongs to the venom metalloproteinase (M12B) family. P-II subfamily. P-IIa sub-subfamily. As to quaternary structure, monomer. Requires Zn(2+) as cofactor. As to expression, expressed by the venom gland.

The protein resides in the secreted. Impairs hemostasis in the envenomed animal. Functionally, inhibits platelet aggregation induced by ADP, thrombin, platelet-activating factor and collagen. Acts by inhibiting fibrinogen interaction with platelet receptors GPIIb/GPIIIa (ITGA2B/ITGB3). The sequence is that of Zinc metalloproteinase/disintegrin from Protobothrops elegans (Elegant pitviper).